Here is a 393-residue protein sequence, read N- to C-terminus: Protein phosphatase 2C homolog 4 (393 aa).

Positions 33-368 (YNCVGSMQGY…DNMTAIIVVL (336 aa)) constitute a PPM-type phosphatase domain. Mn(2+) contacts are provided by D83, G84, D310, and D359.

The protein belongs to the PP2C family. The cofactor is Mg(2+). Mn(2+) is required as a cofactor.

It catalyses the reaction O-phospho-L-seryl-[protein] + H2O = L-seryl-[protein] + phosphate. It carries out the reaction O-phospho-L-threonyl-[protein] + H2O = L-threonyl-[protein] + phosphate. The chain is Protein phosphatase 2C homolog 4 (PTC4) from Saccharomyces cerevisiae (strain ATCC 204508 / S288c) (Baker's yeast).